We begin with the raw amino-acid sequence, 366 residues long: Molybdenum import ATP-binding protein ModC (366 aa).

The region spanning M1–S231 is the ABC transporter domain. Position 33–40 (G33–T40) interacts with ATP. One can recognise a Mop domain in the interval A292–D361.

This sequence belongs to the ABC transporter superfamily. Molybdate importer (TC 3.A.1.8) family. In terms of assembly, the complex is composed of two ATP-binding proteins (ModC), two transmembrane proteins (ModB) and a solute-binding protein (ModA).

The protein resides in the cell inner membrane. The enzyme catalyses molybdate(out) + ATP + H2O = molybdate(in) + ADP + phosphate + H(+). In terms of biological role, part of the ABC transporter complex ModABC involved in molybdenum import. Responsible for energy coupling to the transport system. The protein is Molybdenum import ATP-binding protein ModC of Vibrio cholerae serotype O1 (strain ATCC 39315 / El Tor Inaba N16961).